Reading from the N-terminus, the 86-residue chain is Small ribosomal subunit protein bS20 (86 aa).

Residues 1–25 form a disordered region; the sequence is MANIKSQQKRNKTNERARLRNKSVK.

It belongs to the bacterial ribosomal protein bS20 family.

Binds directly to 16S ribosomal RNA. This Mycobacterium avium (strain 104) protein is Small ribosomal subunit protein bS20.